A 208-amino-acid chain; its full sequence is Large ribosomal subunit protein bL25 (208 aa).

Residues 178-208 (LPPQQSEVPEPDSEEEPKEPEAIKEKDNDGE) form a disordered region. Over residues 186 to 195 (PEPDSEEEPK) the composition is skewed to acidic residues. The span at 196 to 208 (EPEAIKEKDNDGE) shows a compositional bias: basic and acidic residues.

Belongs to the bacterial ribosomal protein bL25 family. CTC subfamily. As to quaternary structure, part of the 50S ribosomal subunit; part of the 5S rRNA/L5/L18/L25 subcomplex. Contacts the 5S rRNA. Binds to the 5S rRNA independently of L5 and L18.

This is one of the proteins that binds to the 5S RNA in the ribosome where it forms part of the central protuberance. This is Large ribosomal subunit protein bL25 from Bacillus pumilus (strain SAFR-032).